A 151-amino-acid chain; its full sequence is Prefoldin subunit alpha (151 aa).

A disordered region spans residues 120-151 (TVEEETASLEEKAQQAQQQQMQQLQQMQQEDE). The span at 133 to 151 (QQAQQQQMQQLQQMQQEDE) shows a compositional bias: low complexity.

It belongs to the prefoldin subunit alpha family. Heterohexamer of two alpha and four beta subunits.

It localises to the cytoplasm. Molecular chaperone capable of stabilizing a range of proteins. Seems to fulfill an ATP-independent, HSP70-like function in archaeal de novo protein folding. The protein is Prefoldin subunit alpha of Natronomonas pharaonis (strain ATCC 35678 / DSM 2160 / CIP 103997 / JCM 8858 / NBRC 14720 / NCIMB 2260 / Gabara) (Halobacterium pharaonis).